Reading from the N-terminus, the 74-residue chain is Histone H1.C8/H1.M1 (74 aa).

Residues 1 to 74 (MSDAAVPPKK…KAVKKAPKKK (74 aa)) are disordered. The segment covering 11 to 74 (ASPKKAAAKK…KAVKKAPKKK (64 aa)) has biased composition (basic residues).

The protein localises to the nucleus. Its subcellular location is the chromosome. In Trypanosoma cruzi, this protein is Histone H1.C8/H1.M1.